Consider the following 728-residue polypeptide: Rho-related BTB domain-containing protein 2 (728 aa).

The rho-like stretch occupies residues methionine 1–serine 210. Residues glycine 21 to threonine 28, aspartate 84 to aspartate 88, and cysteine 140 to aspartate 143 each bind GTP. BTB domains follow at residues alanine 266 to histidine 333 and serine 500 to proline 567. Residues glutamate 304–glycine 313 show a composition bias toward gly residues. Residues glutamate 304–histidine 333 form a disordered region. A compositionally biased stretch (basic and acidic residues) spans arginine 315–glutamate 324. The interval phenylalanine 703–valine 728 is disordered. A compositionally biased stretch (low complexity) spans serine 706–valine 728.

This sequence belongs to the small GTPase superfamily. Rho family. As to quaternary structure, interacts with HSP90AA1 and HSP90AB1. Forms a complex with CUL3 and RBX1. Interacts (via BTB 1 domain) with CUL3. Interacts with MSI2. Autoubiquitinated by RHOBTB2-CUL3-RBX1 ubiquitin ligase complex. Expressed in most tissues, with highest expression in brain.

Regulator of cell proliferation and apoptosis. It likely functions as a substrate-adapter that recruits key substrates, e.g. MSI2, to CUL3-based ubiquitin ligase complexes for degradation. Required for MSI2 ubiquitination and degradation. The protein is Rho-related BTB domain-containing protein 2 (Rhobtb2) of Mus musculus (Mouse).